The chain runs to 308 residues: Low density lipoprotein receptor adapter protein 1 (308 aa).

The residue at position 1 (Met-1) is an N-acetylmethionine. Phosphoserine is present on Ser-14. Residues 41-195 (LLEGMVFSLK…QEGGDVPGTR (155 aa)) form the PID domain. Residues 179 to 201 (EKREKANQEGGDVPGTRRDSTPS) form a disordered region. Phosphoserine is present on residues Ser-198 and Ser-201. Residues 211 to 215 (LLDLE) carry the Clathrin box motif. The interval 248–275 (WELDDGLDEAFSRLAQSRTNPQVLDTGL) is AP-2 complex binding. A [DE]-X(1,2)-F-X-X-[FL]-X-X-X-R motif motif is present at residues 256–265 (EAFSRLAQSR). The segment at 288–308 (PTDWDKPDSSGIDQDDDVFTF) is disordered.

In terms of assembly, interacts (via PID domain) with LDLR (via NPXY motif). Binds to soluble clathrin trimers. Interacts with AP2B1; the interaction mediates the association with the AP-2 complex. Interacts with VLDLR. Interacts with LRP2.

Its subcellular location is the cytoplasm. Adapter protein (clathrin-associated sorting protein (CLASP)) required for efficient endocytosis of the LDL receptor (LDLR) in polarized cells such as hepatocytes and lymphocytes, but not in non-polarized cells (fibroblasts). May be required for LDL binding and internalization but not for receptor clustering in coated pits. May facilitate the endocytosis of LDLR and LDLR-LDL complexes from coated pits by stabilizing the interaction between the receptor and the structural components of the pits. May also be involved in the internalization of other LDLR family members. Binds to phosphoinositides, which regulate clathrin bud assembly at the cell surface. Required for trafficking of LRP2 to the endocytic recycling compartment which is necessary for LRP2 proteolysis, releasing a tail fragment which translocates to the nucleus and mediates transcriptional repression. The sequence is that of Low density lipoprotein receptor adapter protein 1 from Mus musculus (Mouse).